The chain runs to 390 residues: Fer-related kinase 1 (390 aa).

Residues 23–119 form the SH2 domain; it reads YYHGMVPRQD…ASGAKIRRPM (97 aa). The 256-residue stretch at 131-386 folds into the Protein kinase domain; the sequence is IVANKKLGEG…SIHKKLREFY (256 aa). ATP contacts are provided by residues 137–145 and Lys161; that span reads LGEGAFGDV. Asp252 functions as the Proton acceptor in the catalytic mechanism.

Belongs to the protein kinase superfamily. Tyr protein kinase family. Fes/fps subfamily. As to quaternary structure, interacts with hmp-2. It depends on Mn(2+) as a cofactor.

The protein localises to the nucleus. It localises to the cytoplasm. It is found in the cell junction. The protein resides in the cell membrane. It catalyses the reaction L-tyrosyl-[protein] + ATP = O-phospho-L-tyrosyl-[protein] + ADP + H(+). In terms of biological role, non-receptor tyrosine-protein kinase which plays a role in morphogenesis by regulating the epidermal enclosure of the embryo, independently of its kinase activity. Prevents hyperactivation of the Wnt signaling pathway during endoderm development, probably by preventing hmp-2 nuclear translocation. In Caenorhabditis elegans, this protein is Fer-related kinase 1.